Reading from the N-terminus, the 220-residue chain is Metalloproteinase inhibitor 2 (220 aa).

The signal sequence occupies residues 1 to 26 (MPGAALPSLLAWLAVLLLGRARPADA). Zn(2+) is bound at residue cysteine 27. Involved in metalloproteinase-binding regions lie at residues 27–30 (CSCS) and 95–96 (TE). Cystine bridges form between cysteine 27-cysteine 98, cysteine 29-cysteine 127, cysteine 39-cysteine 152, cysteine 154-cysteine 201, cysteine 159-cysteine 164, and cysteine 172-cysteine 193. The NTR domain maps to 27–152 (CSCSPIHPQQ…SLNQRYQMGC (126 aa)).

It belongs to the protease inhibitor I35 (TIMP) family. The activity of TIMP2 is dependent on the presence of disulfide bonds.

It is found in the secreted. Complexes with metalloproteinases (such as collagenases) and irreversibly inactivates them by binding to their catalytic zinc cofactor. This chain is Metalloproteinase inhibitor 2 (TIMP2), found in Gallus gallus (Chicken).